The sequence spans 445 residues: Trigger factor (445 aa).

The PPIase FKBP-type domain occupies glycine 162 to threonine 247.

It belongs to the FKBP-type PPIase family. Tig subfamily.

The protein resides in the cytoplasm. It catalyses the reaction [protein]-peptidylproline (omega=180) = [protein]-peptidylproline (omega=0). Functionally, involved in protein export. Acts as a chaperone by maintaining the newly synthesized protein in an open conformation. Functions as a peptidyl-prolyl cis-trans isomerase. This Rickettsia africae (strain ESF-5) protein is Trigger factor.